A 142-amino-acid chain; its full sequence is Large ribosomal subunit protein uL11 (142 aa).

The protein belongs to the universal ribosomal protein uL11 family. As to quaternary structure, part of the ribosomal stalk of the 50S ribosomal subunit. Interacts with L10 and the large rRNA to form the base of the stalk. L10 forms an elongated spine to which L12 dimers bind in a sequential fashion forming a multimeric L10(L12)X complex. In terms of processing, one or more lysine residues are methylated.

In terms of biological role, forms part of the ribosomal stalk which helps the ribosome interact with GTP-bound translation factors. This is Large ribosomal subunit protein uL11 from Mycobacterium leprae (strain Br4923).